Here is a 296-residue protein sequence, read N- to C-terminus: Nucleotide-binding protein SUB0630 (296 aa).

13–20 (GMSGAGKT) lines the ATP pocket. 63-66 (DMRS) provides a ligand contact to GTP.

This sequence belongs to the RapZ-like family.

Functionally, displays ATPase and GTPase activities. In Streptococcus uberis (strain ATCC BAA-854 / 0140J), this protein is Nucleotide-binding protein SUB0630.